The chain runs to 351 residues: Protein arginine N-methyltransferase 1-B (351 aa).

The region spanning 30–331 (KDYYFDSYAH…KNNRDLDFTV (302 aa)) is the SAM-dependent MTase PRMT-type domain. Residues His-43, Arg-52, Gly-76, Glu-98, and Glu-127 each contribute to the S-adenosyl-L-methionine site. Active-site residues include Glu-142 and Glu-151.

It belongs to the class I-like SAM-binding methyltransferase superfamily. Protein arginine N-methyltransferase family. Homodimer. Homooctamer; individual homodimers associates to form a homooctamer and homooligomerization is required for proper localization to the cell membrane. Individual homodimers can associate to form a homohexamer. Component of a complex with lsm14a/rap55a. Interacts with cirbp. In terms of tissue distribution, from the onset of gastrulation, expressed in dorsal mesoderm, and in dorsal and ventral ectoderm. At the neurula and tail bud stages, expression is restricted to the neuroectoderm, with highest expression in the anterior neural plate.

It localises to the nucleus. It is found in the nucleoplasm. Its subcellular location is the cytoplasm. The protein resides in the cytosol. It carries out the reaction L-arginyl-[protein] + 2 S-adenosyl-L-methionine = N(omega),N(omega)-dimethyl-L-arginyl-[protein] + 2 S-adenosyl-L-homocysteine + 2 H(+). The enzyme catalyses L-arginyl-[protein] + S-adenosyl-L-methionine = N(omega)-methyl-L-arginyl-[protein] + S-adenosyl-L-homocysteine + H(+). It catalyses the reaction N(omega)-methyl-L-arginyl-[protein] + S-adenosyl-L-methionine = N(omega),N(omega)-dimethyl-L-arginyl-[protein] + S-adenosyl-L-homocysteine + H(+). Functionally, arginine methyltransferase that methylates (mono and asymmetric dimethylation) the guanidino nitrogens of arginyl residues present in target proteins. Constitutes the main enzyme that mediates monomethylation and asymmetric dimethylation of histone H4 'Arg-4' (H4R3me1 and H4R3me2a, respectively), a specific tag for epigenetic transcriptional activation. Methylates ilf3 to regulate its DNA-binding activity. Required for neural induction, playing a key role in the control of epidermal versus neural cell fate choice. This chain is Protein arginine N-methyltransferase 1-B (prmt1-b), found in Xenopus laevis (African clawed frog).